Reading from the N-terminus, the 121-residue chain is Large ribosomal subunit protein uL14 (121 aa).

This sequence belongs to the universal ribosomal protein uL14 family. As to quaternary structure, part of the 50S ribosomal subunit. Forms a cluster with proteins L3 and L19. In the 70S ribosome, L14 and L19 interact and together make contacts with the 16S rRNA in bridges B5 and B8.

Its function is as follows. Binds to 23S rRNA. Forms part of two intersubunit bridges in the 70S ribosome. This chain is Large ribosomal subunit protein uL14, found in Phocaeicola vulgatus (strain ATCC 8482 / DSM 1447 / JCM 5826 / CCUG 4940 / NBRC 14291 / NCTC 11154) (Bacteroides vulgatus).